The primary structure comprises 74 residues: ATP synthase subunit c (74 aa).

Helical transmembrane passes span 9 to 29 (IAIA…ASIF) and 51 to 71 (LIGA…AILL).

It belongs to the ATPase C chain family. F-type ATPases have 2 components, F(1) - the catalytic core - and F(0) - the membrane proton channel. F(1) has five subunits: alpha(3), beta(3), gamma(1), delta(1), epsilon(1). F(0) has three main subunits: a(1), b(2) and c(10-14). The alpha and beta chains form an alternating ring which encloses part of the gamma chain. F(1) is attached to F(0) by a central stalk formed by the gamma and epsilon chains, while a peripheral stalk is formed by the delta and b chains.

The protein resides in the cell inner membrane. Its function is as follows. F(1)F(0) ATP synthase produces ATP from ADP in the presence of a proton or sodium gradient. F-type ATPases consist of two structural domains, F(1) containing the extramembraneous catalytic core and F(0) containing the membrane proton channel, linked together by a central stalk and a peripheral stalk. During catalysis, ATP synthesis in the catalytic domain of F(1) is coupled via a rotary mechanism of the central stalk subunits to proton translocation. In terms of biological role, key component of the F(0) channel; it plays a direct role in translocation across the membrane. A homomeric c-ring of between 10-14 subunits forms the central stalk rotor element with the F(1) delta and epsilon subunits. The polypeptide is ATP synthase subunit c (Orientia tsutsugamushi (strain Ikeda) (Rickettsia tsutsugamushi)).